The sequence spans 1416 residues: DNA-directed RNA polymerase subunit beta' (1416 aa).

The Zn(2+) site is built by C71, C73, C86, and C89. 3 residues coordinate Mg(2+): D461, D463, and D465. The Zn(2+) site is built by C815, C889, C896, and C899.

The protein belongs to the RNA polymerase beta' chain family. In terms of assembly, the RNAP catalytic core consists of 2 alpha, 1 beta, 1 beta' and 1 omega subunit. When a sigma factor is associated with the core the holoenzyme is formed, which can initiate transcription. Requires Mg(2+) as cofactor. Zn(2+) is required as a cofactor.

The enzyme catalyses RNA(n) + a ribonucleoside 5'-triphosphate = RNA(n+1) + diphosphate. Its function is as follows. DNA-dependent RNA polymerase catalyzes the transcription of DNA into RNA using the four ribonucleoside triphosphates as substrates. This chain is DNA-directed RNA polymerase subunit beta', found in Haemophilus influenzae (strain PittGG).